The following is a 154-amino-acid chain: D-ribose pyranase 2 (154 aa).

The Proton donor role is filled by histidine 20. Substrate is bound by residues aspartate 28, histidine 98, and 121-123 (WGN).

The protein belongs to the RbsD / FucU family. RbsD subfamily. As to quaternary structure, homodecamer.

The protein resides in the cytoplasm. It carries out the reaction beta-D-ribopyranose = beta-D-ribofuranose. The protein operates within carbohydrate metabolism; D-ribose degradation; D-ribose 5-phosphate from beta-D-ribopyranose: step 1/2. In terms of biological role, catalyzes the interconversion of beta-pyran and beta-furan forms of D-ribose. The sequence is that of D-ribose pyranase 2 from Rubrobacter xylanophilus (strain DSM 9941 / JCM 11954 / NBRC 16129 / PRD-1).